Consider the following 1193-residue polypeptide: MNLTKLMKVIGYINIITNCVQSFTNRADKKRYNVFAKSFINTINTNLYTFKAVMSKTPEWIHEKSPKHNSYDIIEKRYNEEFKMTYTVYQHKKAKTQVISLGTNDPLDVEQAFAFYVKTLTHSGKGIPHILEHSVLSGSKNYNYKNSIGLLEKGTLHTHLNAYTFNDRTVYMAGSMNNKDFFNIMGVYMDSVFQPNVLENKYIFETEGWTYEVEKLKEDEKGKAEIPQMKDYKVSFNGIVYNEMKGALSSPLEDLYHEEMKYMFPDNVHSNNSGGDPKEITNLTYEEFKEFYYKNYNPKKVKVFFFSKNNPTELLNFVDQYLGQLDYSKYRDDAVESVEYQTYKKGPFYIKKKYGDHSEEKENLVSVAWLLNPKVDKTNNHNNNHSNNQSSENNGYSNGSHSSDLSLENPTDYFVLLIINNLLIHTPESVLYKALTDCGLGNNVIDRGLNDSLVQYIFSIGLKGIKRNNEKIKNFDKVHYEVEDVIMNALKKVVKEGFNKSAVEASINNIEFILKEANLKTSKSIDFVFEMTSKLNYNRDPLLIFEFEKYLNIVKNKIKNEPMYLEKFVEKHFINNAHRSVILLEGDENYAQEQENLEKQELKKRIENFNEQEKEQVIKNFEELSKYKNAEESPEHLNKFPIISISDLNKKTLEVPVNVYFTNINENNNIMETYNKLKTNEHMLKDNMDVFLKKYVLKNDKHNTNNNNNNNNNMDYSFTETKYEGNVPILVYEMPTTGIVYLQFVFSLDHLTVDELAYLNLFKTLILENKTNKRSSEDFVILREKNIGSMSANVALYSKDDHLNVTDKYNAQALFNLEMHVLSHKCNDALNIALEAVKESDFSNKKKVIDILKRKINGMKTTFSEKGYAILMKYVKAHLNSKHYAHNIIYGYENYLKLQEQLELAENDFKTLENILVRIRNKIFNKKNLMVSVTSDYGALKHLFVNSNESLKNLVSYFEENDKYINDMQNKVNDPTVMGWNEEIKSKKLFDEEKVKKEFFVLPTFVNSVSMSGILFKPGEYLDPSFTVIVAALKNSYLWDTVRGLNGAYGVFADIEYDGSVVFLSARDPNLEKTLATFRESAKGLRKMADTMTENDLLRYIINTIGTIDKPRRGIELSKLSFLRLISNESEQDRVEFRKRIMNTKKEDFYKFADLLESKVNEFEKNIVIITTKEKANEYIANVDGEFKKVLIE.

A Zn(2+)-binding site is contributed by histidine 129. Glutamate 132 acts as the Proton acceptor in catalysis. Zn(2+)-binding residues include histidine 133 and glutamate 243. Residues 376–404 (DKTNNHNNNHSNNQSSENNGYSNGSHSSD) are disordered. Positions 380-394 (NHNNNHSNNQSSENN) are enriched in low complexity. Over residues 395 to 404 (GYSNGSHSSD) the composition is skewed to polar residues. Residues 583-619 (LLEGDENYAQEQENLEKQELKKRIENFNEQEKEQVIK) are a coiled coil.

It belongs to the peptidase M16 family. As to quaternary structure, monomer. Component of the hemozoin formation complex (HFC) composed of falcipains FP2A and/or FP2B, plasmepsins PMII, PMIII/HAP and PMIV, heme detoxifying protein HDP and falcilysin FLN. The HFC complex is involved in hemoglobin degradation and detoxification of heme in the food vacuole during the asexual blood stage. Zn(2+) is required as a cofactor. In terms of processing, does not require processing for targeting to the food vacuole or maturation.

The protein resides in the vacuole membrane. The protein localises to the plastid. It is found in the apicoplast. It localises to the vesicle. Its function is as follows. In the food vacuole, acts downstream of proteases plasmepsins PMI and PMII and falcipains during the catabolism of host hemoglobin by cleaving peptide fragments of alpha and beta hemoglobin subunits generated by PMI and PMII and falcipains. In the apicoplast, degrades apicoplast transit peptides after their cleavage. Prefers bulky hydrophobic amino acids in the P1' position at both acidic and neutral pH. At P2', prefers hydrophobic residues at acidic pH; at neutral pH, these same residues are abundant but prefers Arg. At P3', prefers hydrophobic residues, especially Met, at both pH conditions. At P4' and P5', prefers acidic residues at acidic pH, however, at neutral pH, the enzyme is less selective at these positions. The optimal site cleavage at acidic pH is YNEHS-|-FFMEE and, at neutral pH, MKRHS-|-FRMRG. The chain is Falcilysin from Plasmodium falciparum (isolate 3D7).